Here is a 415-residue protein sequence, read N- to C-terminus: AP-3 complex subunit mu (415 aa).

Positions 178–414 (SNEVYVDLVE…QTRAGEFDVR (237 aa)) constitute an MHD domain.

Belongs to the adaptor complexes medium subunit family. In terms of assembly, adaptor protein complex 3 (AP-3) is a heterotetramer composed of two large adaptins (delta-type subunit and beta-type subunit), a medium adaptin (mu-type subunit) and a small adaptin (sigma-type subunit).

The protein localises to the cytoplasm. It is found in the golgi apparatus. Its subcellular location is the cytoplasmic vesicle membrane. In terms of biological role, part of the AP-3 complex, an adaptor-related complex which seems to be clathrin-associated. The complex is associated with the Golgi region as well as more peripheral structures. It facilitates the budding of vesicles from the Golgi membrane and may be directly involved in trafficking to the vacuole. It also functions in maintaining the identity of lytic vacuoles and in regulating the transition between storage and lytic vacuoles. This Arabidopsis thaliana (Mouse-ear cress) protein is AP-3 complex subunit mu (AP3M).